The sequence spans 391 residues: MAKEKFERSKPHVNIGTIGHVDHGKTTLTAAITKQFGDFKAYDEIDGAPEEKARGITISTAHVEYETDARHYAHVDCPGHADYVKNMITGAAQMDGAILVVNAADGPMPQTREHILLGRQVGIPYMVVFMNKVDQVDDEELLELVEMEIRELLSSYEYPGDDIPIIAGSALAALEGRDPEIGEQKIAELMKAVDDYIPTPARAVDQPFLMPIEDVFSISGRGTVVTGRVERGVINVGDEIEIVGIRDTKKTTCTGVEMFRKLLDRGEAGDNIGALLRGVDREGVERGQVLCKPGSVTPHTKFEAEAYILTKEEGGRHTPFFANYRPQFYFRTTDVTGTVTLPEGTEMVMPGDNLKFGVELIAPIAMEDGLRFAIREGGRTVGAGVVSKIIE.

The region spanning 10 to 201 (KPHVNIGTIG…AVDDYIPTPA (192 aa)) is the tr-type G domain. The interval 19–26 (GHVDHGKT) is G1. Residue 19-26 (GHVDHGKT) participates in GTP binding. Threonine 26 lines the Mg(2+) pocket. A G2 region spans residues 55–59 (GITIS). A G3 region spans residues 76-79 (DCPG). GTP is bound by residues 76–80 (DCPGH) and 131–134 (NKVD). A G4 region spans residues 131–134 (NKVD). A G5 region spans residues 169-171 (SAL).

The protein belongs to the TRAFAC class translation factor GTPase superfamily. Classic translation factor GTPase family. EF-Tu/EF-1A subfamily. Monomer.

Its subcellular location is the cytoplasm. It catalyses the reaction GTP + H2O = GDP + phosphate + H(+). In terms of biological role, GTP hydrolase that promotes the GTP-dependent binding of aminoacyl-tRNA to the A-site of ribosomes during protein biosynthesis. This Dinoroseobacter shibae (strain DSM 16493 / NCIMB 14021 / DFL 12) protein is Elongation factor Tu.